Here is a 461-residue protein sequence, read N- to C-terminus: Argininosuccinate lyase (461 aa).

The protein belongs to the lyase 1 family. Argininosuccinate lyase subfamily.

The protein localises to the cytoplasm. It carries out the reaction 2-(N(omega)-L-arginino)succinate = fumarate + L-arginine. Its pathway is amino-acid biosynthesis; L-arginine biosynthesis; L-arginine from L-ornithine and carbamoyl phosphate: step 3/3. Its activity is regulated as follows. Strongly inhibited by L-arginine. Inhibitory effects are lowered at pH 7.0 compared to those at pH 8.0. At 45 degrees Celsius and pH 8.0, activity decreases to 94%, 74% and 37% in the presence of 0.6 mM, 2.8 mM and 10 mM arginine, respectively. Activity also decreases to 86% in the presence of 10 mM sodium succinate or sodium citrate. Activity does not decrease in the presence of 1 mM or 10 mM L-lysine, which has a similar structure to arginine. Catalyzes the last step of arginine biosynthesis, the conversion of argininosuccinate into L-arginine and fumarate. This is Argininosuccinate lyase from Synechocystis sp. (strain ATCC 27184 / PCC 6803 / Kazusa).